We begin with the raw amino-acid sequence, 86 residues long: Large ribosomal subunit protein bL27 (86 aa).

The segment covering 1–10 has biased composition (gly residues); the sequence is MAQKKGGGST. Residues 1–21 are disordered; sequence MAQKKGGGSTRNGRDSESKRL.

Belongs to the bacterial ribosomal protein bL27 family.

In Cupriavidus taiwanensis (strain DSM 17343 / BCRC 17206 / CCUG 44338 / CIP 107171 / LMG 19424 / R1) (Ralstonia taiwanensis (strain LMG 19424)), this protein is Large ribosomal subunit protein bL27.